The primary structure comprises 361 residues: Histidinol-phosphate aminotransferase (361 aa).

An N6-(pyridoxal phosphate)lysine modification is found at Lys219.

This sequence belongs to the class-II pyridoxal-phosphate-dependent aminotransferase family. Histidinol-phosphate aminotransferase subfamily. Homodimer. Pyridoxal 5'-phosphate serves as cofactor.

The enzyme catalyses L-histidinol phosphate + 2-oxoglutarate = 3-(imidazol-4-yl)-2-oxopropyl phosphate + L-glutamate. It functions in the pathway amino-acid biosynthesis; L-histidine biosynthesis; L-histidine from 5-phospho-alpha-D-ribose 1-diphosphate: step 7/9. In Cereibacter sphaeroides (strain KD131 / KCTC 12085) (Rhodobacter sphaeroides), this protein is Histidinol-phosphate aminotransferase.